The sequence spans 501 residues: Lysine--tRNA ligase (501 aa).

Mg(2+)-binding residues include glutamate 411 and glutamate 418.

Belongs to the class-II aminoacyl-tRNA synthetase family. In terms of assembly, homodimer. It depends on Mg(2+) as a cofactor.

Its subcellular location is the cytoplasm. The catalysed reaction is tRNA(Lys) + L-lysine + ATP = L-lysyl-tRNA(Lys) + AMP + diphosphate. This is Lysine--tRNA ligase from Clostridium perfringens (strain ATCC 13124 / DSM 756 / JCM 1290 / NCIMB 6125 / NCTC 8237 / Type A).